Reading from the N-terminus, the 604-residue chain is Baculoviral IAP repeat-containing protein 3 (604 aa).

Residues 29-96 form a BIR 1 repeat; that stretch reads ELYRMSTYST…RNLYPSCSFI (68 aa). Arginine 130 carries the omega-N-methylarginine modification. Phosphoserine is present on serine 140. BIR repeat units follow at residues 169 to 235 and 255 to 322; these read EEDR…CPFV and LAAR…CEYL. Zn(2+) is bound by residues cysteine 292, cysteine 295, histidine 312, and cysteine 319. A CARD domain is found at 439–529; sequence RESDDVSLIR…MLYKRFFVQQ (91 aa). The segment at 557–592 adopts an RING-type zinc-finger fold; the sequence is CKVCMDKEVSIVFIPCGHLVVCRDCAPSLRKCPICR.

It belongs to the IAP family. As to quaternary structure, interacts with PRSS25; the interaction inhibits apoptotic suppressor activity. The BIR motifs region interacts with TNF receptor associated factors 1 and 2 (TRAF1 and TRAF2) to form a heteromeric complex, which is then recruited to the tumor necrosis factor receptor 2 (TNFR2). Interaction with TRAF2 is required for ubiquitination of IKBKE, degradation of NFKBIA and activation of NF-kappa-B. Interacts with RIP1, RIP2, RIP3, RIP4 and USP19. Post-translationally, auto-ubiquitinated and degraded by the proteasome in apoptotic cells.

Its subcellular location is the cytoplasm. The protein resides in the nucleus. It catalyses the reaction S-ubiquitinyl-[E2 ubiquitin-conjugating enzyme]-L-cysteine + [acceptor protein]-L-lysine = [E2 ubiquitin-conjugating enzyme]-L-cysteine + N(6)-ubiquitinyl-[acceptor protein]-L-lysine.. USP19 regulates the stability of BIRC3/c-IAP2 by preventing its ubiquitination. In terms of biological role, multi-functional protein which regulates not only caspases and apoptosis, but also modulates inflammatory signaling and immunity, mitogenic kinase signaling and cell proliferation, as well as cell invasion and metastasis. Acts as an E3 ubiquitin-protein ligase regulating NF-kappa-B signaling and regulates both canonical and non-canonical NF-kappa-B signaling by acting in opposite directions: acts as a positive regulator of the canonical pathway and suppresses constitutive activation of non-canonical NF-kappa-B signaling. The target proteins for its E3 ubiquitin-protein ligase activity include: RIPK1, RIPK2, RIPK3, RIPK4, CASP3, CASP7, CASP8, IKBKE, TRAF1, and BCL10. Acts as an important regulator of innate immune signaling via regulation of Toll-like receptors (TLRs), Nodlike receptors (NLRs) and RIG-I like receptors (RLRs), collectively referred to as pattern recognition receptors (PRRs). Protects cells from spontaneous formation of the ripoptosome, a large multi-protein complex that has the capability to kill cancer cells in a caspase-dependent and caspase-independent manner. Suppresses ripoptosome formation by ubiquitinating RIPK1 and CASP8. The protein is Baculoviral IAP repeat-containing protein 3 (BIRC3) of Canis lupus familiaris (Dog).